Consider the following 600-residue polypeptide: Elongation factor 4 (600 aa).

A tr-type G domain is found at 5 to 187; that stretch reads KYIRNFSIIA…AIINKLPSPK (183 aa). GTP contacts are provided by residues 17 to 22 and 134 to 137; these read DHGKST and NKID.

Belongs to the TRAFAC class translation factor GTPase superfamily. Classic translation factor GTPase family. LepA subfamily.

The protein resides in the cell inner membrane. The enzyme catalyses GTP + H2O = GDP + phosphate + H(+). Required for accurate and efficient protein synthesis under certain stress conditions. May act as a fidelity factor of the translation reaction, by catalyzing a one-codon backward translocation of tRNAs on improperly translocated ribosomes. Back-translocation proceeds from a post-translocation (POST) complex to a pre-translocation (PRE) complex, thus giving elongation factor G a second chance to translocate the tRNAs correctly. Binds to ribosomes in a GTP-dependent manner. In Rickettsia typhi (strain ATCC VR-144 / Wilmington), this protein is Elongation factor 4.